The following is a 466-amino-acid chain: Ribulose bisphosphate carboxylase large chain (466 aa).

Residue Lys5 is modified to N6,N6,N6-trimethyllysine. The substrate site is built by Asn114 and Thr164. Residue Lys166 is the Proton acceptor of the active site. Position 168 (Lys168) interacts with substrate. 3 residues coordinate Mg(2+): Lys192, Asp194, and Glu195. An N6-carboxylysine modification is found at Lys192. His285 functions as the Proton acceptor in the catalytic mechanism. The substrate site is built by Arg286, His318, and Ser370.

It belongs to the RuBisCO large chain family. Type I subfamily. As to quaternary structure, heterohexadecamer of 8 large chains and 8 small chains; disulfide-linked. The disulfide link is formed within the large subunit homodimers. The cofactor is Mg(2+). Post-translationally, the disulfide bond which can form in the large chain dimeric partners within the hexadecamer appears to be associated with oxidative stress and protein turnover.

The protein localises to the plastid. It localises to the chloroplast. The enzyme catalyses 2 (2R)-3-phosphoglycerate + 2 H(+) = D-ribulose 1,5-bisphosphate + CO2 + H2O. It carries out the reaction D-ribulose 1,5-bisphosphate + O2 = 2-phosphoglycolate + (2R)-3-phosphoglycerate + 2 H(+). In terms of biological role, ruBisCO catalyzes two reactions: the carboxylation of D-ribulose 1,5-bisphosphate, the primary event in carbon dioxide fixation, as well as the oxidative fragmentation of the pentose substrate in the photorespiration process. Both reactions occur simultaneously and in competition at the same active site. The protein is Ribulose bisphosphate carboxylase large chain of Caltha palustris (Yellow marsh marigold).